The following is a 1117-amino-acid chain: Sodium-driven chloride bicarbonate exchanger (1117 aa).

A compositionally biased stretch (polar residues) spans 1–14 (MQSGTCESFQSLSH). Disordered stretches follow at residues 1–26 (MQSG…VDRG), 57–94 (GRKS…FDTP), 244–312 (KQSE…PHQQ), and 456–475 (NGTA…GPEL). Topologically, residues 1–508 (MQSGTCESFQ…DFTDALSLQC (508 aa)) are cytoplasmic. Positions 15–26 (QRNDEEAVVDRG) are enriched in basic and acidic residues. Basic residues predominate over residues 58 to 75 (RKSHRRHRHRGHKHRKRD). Over residues 76-89 (RERDSGLEDGRESP) the composition is skewed to basic and acidic residues. Phosphoserine is present on Ser-88. At Thr-93 the chain carries Phosphothreonine. Polar residues predominate over residues 247-263 (EPNSMDKNAGQVVSPQS). Residue Ser-275 is modified to Phosphoserine. The helical transmembrane segment at 509–529 (LASFLFLYCACMSPVITFGGL) threads the bilayer. Residues 530–537 (LGEATEGR) are Extracellular-facing. A helical membrane pass occupies residues 538 to 558 (ISAIESLFGASMTGIAYSLFG). At 559–561 (GQP) the chain is on the cytoplasmic side. The helical transmembrane segment at 562–582 (LTILGSTGPVLVFEKILFKFC) threads the bilayer. Residues 583–595 (KEYGLSYLSLRAS) lie on the Extracellular side of the membrane. Residues 596 to 616 (IGLWTATLCIILVATDASSLV) form a helical membrane-spanning segment. Residues 617-625 (CYITRFTEE) are Cytoplasmic-facing. Residues 626–646 (AFASLICIIFIYEALEKLFEL) form a helical membrane-spanning segment. The Extracellular portion of the chain corresponds to 647 to 719 (SEAYPINMHN…VGRACGHEHP (73 aa)). 4 N-linked (GlcNAc...) asparagine glycosylation sites follow: Asn-673, Asn-676, Asn-686, and Asn-696. Residues 720 to 740 (YVPDVLFWSVILFFSTVTLSA) form a helical membrane-spanning segment. Residues 741–761 (TLKQFKTSRYFPTKVRSIVSD) lie on the Cytoplasmic side of the membrane. Residues 762–782 (FAVFLTILCMVLIDYAIGIPS) traverse the membrane as a helical segment. Over 783 to 808 (PKLQVPSVFKPTRDDRGWFVTPLGPN) the chain is Extracellular. Residues 809–829 (PWWTVIAAIIPALLCTILIFM) form a helical membrane-spanning segment. Topologically, residues 830–854 (DQQITAVIINRKEHKLKKGCGYHLD) are cytoplasmic. A helical transmembrane segment spans residues 855 to 875 (LLMVAVMLGVCSIMGLPWFVA). Topologically, residues 876 to 911 (ATVLSITHVNSLKLESECSAPGEQPKFLGIREQRVT) are extracellular. The chain crosses the membrane as a helical span at residues 912–932 (GLMIFILMGSSVFMTSILKFI). Residues 933–934 (PM) are Cytoplasmic-facing. A helical membrane pass occupies residues 935-955 (PVLYGVFLYMGASSLKGIQFF). Topologically, residues 956 to 997 (DRIKLFWMPAKHQPDFIYLRHVPLRKVHLFTVIQMSCLGLLW) are extracellular. Residues 998–1018 (IIKVSRAAIVFPMMVLALVFV) form a helical membrane-spanning segment. Topologically, residues 1019–1117 (RKLMDFLFTK…SSFPSKSSPS (99 aa)) are cytoplasmic. Phosphoserine occurs at positions 1056 and 1084.

It belongs to the anion exchanger (TC 2.A.31) family. Post-translationally, N-glycosylated.

It is found in the basolateral cell membrane. The protein resides in the apical cell membrane. The protein localises to the cell projection. Its subcellular location is the dendrite. It localises to the axon. It is found in the perikaryon. The protein resides in the presynapse. The protein localises to the postsynapse. Functionally, sodium/bicarbonate cotransporter which plays an important role in regulating intracellular pH. Has been shown to act as a sodium/bicarbonate cotransporter in exchange for intracellular chloride. Has also been shown to act as a sodium/biocarbonate cotransporter which does not couple net influx of bicarbonate to net efflux of chloride, with the observed chloride efflux being due to chloride self-exchange. Controls neuronal pH and may contribute to the secretion of cerebrospinal fluid. Acting on presynaptic intracellular pH, it promotes GABA release, reduces the excitability of CA1 pyramidal neurons, and modulates short-term synaptic plasticity. Required in retinal cells to maintain normal pH which is necessary for normal vision. In the kidney, likely to mediate bicarbonate reclamation in the apical membrane of the proximal tubules. The polypeptide is Sodium-driven chloride bicarbonate exchanger (Bos taurus (Bovine)).